Here is a 477-residue protein sequence, read N- to C-terminus: UDP-N-acetylmuramate--L-alanine ligase (477 aa).

122 to 128 (GTHGKTT) contributes to the ATP binding site.

This sequence belongs to the MurCDEF family.

The protein resides in the cytoplasm. The enzyme catalyses UDP-N-acetyl-alpha-D-muramate + L-alanine + ATP = UDP-N-acetyl-alpha-D-muramoyl-L-alanine + ADP + phosphate + H(+). The protein operates within cell wall biogenesis; peptidoglycan biosynthesis. Cell wall formation. The sequence is that of UDP-N-acetylmuramate--L-alanine ligase from Xanthomonas euvesicatoria pv. vesicatoria (strain 85-10) (Xanthomonas campestris pv. vesicatoria).